A 127-amino-acid polypeptide reads, in one-letter code: Phosphoribosyl-AMP cyclohydrolase (127 aa).

Asp78 lines the Mg(2+) pocket. Cys79 contacts Zn(2+). Positions 80 and 82 each coordinate Mg(2+). Zn(2+) is bound by residues Cys95 and Cys102.

It belongs to the PRA-CH family. As to quaternary structure, homodimer. Mg(2+) serves as cofactor. Requires Zn(2+) as cofactor.

The protein resides in the cytoplasm. The catalysed reaction is 1-(5-phospho-beta-D-ribosyl)-5'-AMP + H2O = 1-(5-phospho-beta-D-ribosyl)-5-[(5-phospho-beta-D-ribosylamino)methylideneamino]imidazole-4-carboxamide. Its pathway is amino-acid biosynthesis; L-histidine biosynthesis; L-histidine from 5-phospho-alpha-D-ribose 1-diphosphate: step 3/9. Catalyzes the hydrolysis of the adenine ring of phosphoribosyl-AMP. The sequence is that of Phosphoribosyl-AMP cyclohydrolase from Salinibacter ruber (strain DSM 13855 / M31).